Reading from the N-terminus, the 338-residue chain is Glycerol-3-phosphate dehydrogenase [NAD(P)+] 1 (338 aa).

Positions 11, 12, 32, 33, and 109 each coordinate NADPH. Positions 109, 140, and 142 each coordinate sn-glycerol 3-phosphate. An NADPH-binding site is contributed by Ala-144. Lys-195, Asp-248, Ser-258, Arg-259, and Asn-260 together coordinate sn-glycerol 3-phosphate. Lys-195 (proton acceptor) is an active-site residue. Residue Arg-259 coordinates NADPH. Residues Val-283 and Glu-285 each contribute to the NADPH site.

This sequence belongs to the NAD-dependent glycerol-3-phosphate dehydrogenase family.

The protein resides in the cytoplasm. The catalysed reaction is sn-glycerol 3-phosphate + NAD(+) = dihydroxyacetone phosphate + NADH + H(+). It carries out the reaction sn-glycerol 3-phosphate + NADP(+) = dihydroxyacetone phosphate + NADPH + H(+). The protein operates within membrane lipid metabolism; glycerophospholipid metabolism. Catalyzes the reduction of the glycolytic intermediate dihydroxyacetone phosphate (DHAP) to sn-glycerol 3-phosphate (G3P), the key precursor for phospholipid synthesis. The protein is Glycerol-3-phosphate dehydrogenase [NAD(P)+] 1 of Lactobacillus delbrueckii subsp. bulgaricus (strain ATCC 11842 / DSM 20081 / BCRC 10696 / JCM 1002 / NBRC 13953 / NCIMB 11778 / NCTC 12712 / WDCM 00102 / Lb 14).